Reading from the N-terminus, the 324-residue chain is Deoxyhypusine hydroxylase (324 aa).

2 HEAT-like PBS-type repeats span residues 60–86 (LKHE…VLED) and 94–119 (RHEA…YLHR). Positions 62, 63, 95, and 96 each coordinate Fe cation. Positions 143–152 (EERKQEKLRQ) are enriched in basic and acidic residues. A disordered region spans residues 143–171 (EERKQEKLRQSDFASVDPAPPMPEDDEKQ). HEAT-like PBS-type repeat units follow at residues 189–219 (KRYR…LAKG), 227–253 (FRHE…ALSN), and 260–287 (VRHE…FLHD). His229, Glu230, His262, and Glu263 together coordinate Fe cation.

This sequence belongs to the deoxyhypusine hydroxylase family. The cofactor is Fe(2+).

The protein resides in the cytoplasm. Its subcellular location is the nucleus. The enzyme catalyses [eIF5A protein]-deoxyhypusine + AH2 + O2 = [eIF5A protein]-hypusine + A + H2O. It functions in the pathway protein modification; eIF5A hypusination. Functionally, catalyzes the hydroxylation of the N(6)-(4-aminobutyl)-L-lysine intermediate to form hypusine, an essential post-translational modification only found in mature eIF-5A factor. The chain is Deoxyhypusine hydroxylase (lia1) from Neurospora crassa (strain ATCC 24698 / 74-OR23-1A / CBS 708.71 / DSM 1257 / FGSC 987).